Consider the following 288-residue polypeptide: Stomatin (288 aa).

The tract at residues 1–22 is disordered; that stretch reads MAEKRHTRDSEAQRLPDSFKDS. Over 1–25 the chain is Cytoplasmic; the sequence is MAEKRHTRDSEAQRLPDSFKDSPSK. At Ser-10 the chain carries Phosphoserine; by PKA. Ser-18 bears the Phosphoserine mark. An intramembrane segment occupies 26–54; that stretch reads GLGPCGWILVAFSFLFTVITFPISIWMCI. Cys-30 carries the S-palmitoyl cysteine lipid modification. The Cytoplasmic segment spans residues 55–288; sequence KIIKEYERAI…IIGAKHSHLG (234 aa). Cys-87 is lipidated: S-palmitoyl cysteine; partial. A phosphoserine mark is found at Ser-161 and Ser-244. A required for homooligomerization region spans residues 265–273; sequence STIVFPLPI. The interval 267 to 269 is required for lipid raft association; it reads IVF. Positions 273–287 are interaction with LANCL1; it reads IDMLQGIIGAKHSHL.

The protein belongs to the band 7/mec-2 family. Homodimer and higher order homooligomer. The homodimer is banana-shaped. Interacts with ASIC1, ASIC2 and ASIC3. Interacts with LANCL1. Interacts with SLC2A1. Interacts with SLC4A1; this interaction positively regulates SLC4A1 activity. Identified in large complexes with SLC40A1, SLC14A1, SLC29A1 and AQP1. Interacts with STOML1; may redistribute STOM from the plasma membrane to late endosomes. Detected in erythrocytes (at protein level). Widely expressed.

The protein localises to the cell membrane. The protein resides in the cytoplasm. It localises to the cytoskeleton. It is found in the membrane raft. Its subcellular location is the melanosome. The protein localises to the cytoplasmic vesicle. In terms of biological role, regulates ion channel activity and transmembrane ion transport. Regulates ASIC2 and ASIC3 channel activity. This Homo sapiens (Human) protein is Stomatin.